Here is a 169-residue protein sequence, read N- to C-terminus: Ribosome maturation factor RimM (169 aa).

Positions 95 to 169 (EDGYYWTDLI…QITVDWELGY (75 aa)) constitute a PRC barrel domain.

This sequence belongs to the RimM family. In terms of assembly, binds ribosomal protein uS19.

It localises to the cytoplasm. Functionally, an accessory protein needed during the final step in the assembly of 30S ribosomal subunit, possibly for assembly of the head region. Essential for efficient processing of 16S rRNA. May be needed both before and after RbfA during the maturation of 16S rRNA. It has affinity for free ribosomal 30S subunits but not for 70S ribosomes. The chain is Ribosome maturation factor RimM from Nitrosomonas europaea (strain ATCC 19718 / CIP 103999 / KCTC 2705 / NBRC 14298).